Consider the following 590-residue polypeptide: Transcription factor GTE7 (590 aa).

A disordered region spans residues 125–160 (LNNFTGEKNDLGPKKKKQKKNVSGLKRSNQFGPSDP). Residues 164-270 (KLLAGMLNTC…DHFDGMFNPA (107 aa)) form the Bromo domain. Disordered stretches follow at residues 282–400 (TGSS…KDPN) and 476–590 (RQGF…EAQC). Residues 288-298 (PEPDFKPDFKQ) are compositionally biased toward basic and acidic residues. Over residues 347–369 (PSPPPPPPVIQPELPQPQPPPPQ) the composition is skewed to pro residues. Residues 394 to 475 (PKAKDPNKRL…NYKKMASKIK (82 aa)) form the NET domain. Over residues 498–508 (SAEKRTRRGDA) the composition is skewed to basic and acidic residues. Over residues 509-521 (GEEDVDIGEDIPI) the composition is skewed to acidic residues. The segment covering 537–562 (AAAASSGSSSSGSSSSSGGSSSSSDS) has biased composition (low complexity).

It localises to the nucleus. In Arabidopsis thaliana (Mouse-ear cress), this protein is Transcription factor GTE7 (GTE7).